Consider the following 557-residue polypeptide: Fanconi anemia group C protein homolog (557 aa).

As to quaternary structure, belongs to the multisubunit FA complex composed of FANCA, FANCB, FANCC, FANCE, FANCF, FANCG, FANCL/PHF9 and FANCM. This complex may also include HSP70. Interacts with ZBTB32. Upon IFNG induction, interacts with STAT1. Interacts with CDK1. Interacts with EIF2AK2.

Its subcellular location is the nucleus. It localises to the cytoplasm. Its function is as follows. DNA repair protein that may operate in a postreplication repair or a cell cycle checkpoint function. May be implicated in interstrand DNA cross-link repair and in the maintenance of normal chromosome stability. Upon IFNG induction, may facilitate STAT1 activation by recruiting STAT1 to IFNGR1. The sequence is that of Fanconi anemia group C protein homolog (Fancc) from Rattus norvegicus (Rat).